We begin with the raw amino-acid sequence, 419 residues long: CinA-like protein (419 aa).

Belongs to the CinA family.

This chain is CinA-like protein, found in Leptospira borgpetersenii serovar Hardjo-bovis (strain JB197).